The sequence spans 189 residues: Parkinson disease protein 7 homolog (189 aa).

Ala-2 is subject to N-acetylalanine; in Protein/nucleic acid deglycase DJ-1, N-terminally processed. 2 S-palmitoyl cysteine lipidation sites follow: Cys-46 and Cys-53. Tyr-67 bears the Phosphotyrosine mark. Cys-106 serves as the catalytic Nucleophile. Residue Cys-106 is modified to Cysteine sulfinic acid (-SO2H); alternate. Cys-106 carries the S-palmitoyl cysteine; alternate lipid modification. His-126 is an active-site residue. Residue Lys-130 forms a Glycyl lysine isopeptide (Lys-Gly) (interchain with G-Cter in SUMO) linkage. The residue at position 148 (Lys-148) is an N6-acetyllysine. Position 182 is an N6-succinyllysine (Lys-182).

It belongs to the peptidase C56 family. As to quaternary structure, homodimer. Binds EFCAB6/DJBP and PIAS2. Part of a ternary complex containing PARK7, EFCAB6/DJBP and AR. Interacts (via N-terminus) with OTUD7B. Interacts with BBS1, HIPK1, CLCF1 and MTERF. Forms a complex with PINK1 and PRKN. Interacts (via C-terminus) with NCF1; the interaction is enhanced by LPS and modulates NCF1 phosphorylation and membrane translocation. Interacts with NENF. It depends on Deglycase activity does not require glutathione as a cofactor, however, glycated glutathione constitutes a PARK7 substrate. as a cofactor. In terms of processing, sumoylated on Lys-130 by PIAS2 or PIAS4; which is essential for cell-growth promoting activity and transforming activity. Post-translationally, undergoes cleavage of a C-terminal peptide and subsequent activation of protease activity in response to oxidative stress. Detected in liver, heart, spleen and testis (at protein level). Detected in liver, heart, spleen, kidney, epididymidis, vas deferens, sperm cells and testis.

The protein localises to the cell membrane. Its subcellular location is the cytoplasm. It is found in the nucleus. The protein resides in the membrane raft. It localises to the mitochondrion. The protein localises to the endoplasmic reticulum. The catalysed reaction is N(omega)-(1-hydroxy-2-oxopropyl)-L-arginyl-[protein] + H2O = lactate + L-arginyl-[protein] + H(+). The enzyme catalyses N(6)-(1-hydroxy-2-oxopropyl)-L-lysyl-[protein] + H2O = lactate + L-lysyl-[protein] + H(+). It catalyses the reaction S-(1-hydroxy-2-oxopropyl)-L-cysteinyl-[protein] + H2O = lactate + L-cysteinyl-[protein] + H(+). It carries out the reaction N(omega)-(1-hydroxy-2-oxoethyl)-L-arginyl-[protein] + H2O = L-arginyl-[protein] + glycolate + H(+). The catalysed reaction is N(6)-(1-hydroxy-2-oxoethyl)-L-lysyl-[protein] + H2O = glycolate + L-lysyl-[protein] + H(+). The enzyme catalyses S-(1-hydroxy-2-oxoethyl)-L-cysteinyl-[protein] + H2O = glycolate + L-cysteinyl-[protein] + H(+). It catalyses the reaction N(2)-(1-hydroxy-2-oxopropyl)-dGTP + H2O = lactate + dGTP + H(+). It carries out the reaction N(2)-(1-hydroxy-2-oxopropyl)-GTP + H2O = lactate + GTP + H(+). The catalysed reaction is N(2)-(1-hydroxy-2-oxopropyl)-GDP + H2O = lactate + GDP + H(+). The enzyme catalyses N(2)-(1-hydroxy-2-oxopropyl)-GMP + H2O = lactate + GMP + H(+). It catalyses the reaction N(2)-(1-hydroxy-2-oxoethyl)-dGTP + H2O = dGTP + glycolate + H(+). It carries out the reaction N(2)-(1-hydroxy-2-oxoethyl)-GTP + H2O = glycolate + GTP + H(+). The catalysed reaction is N(2)-(1-hydroxy-2-oxoethyl)-GDP + H2O = glycolate + GDP + H(+). The enzyme catalyses N(2)-(1-hydroxy-2-oxoethyl)-GMP + H2O = glycolate + GMP + H(+). It catalyses the reaction an N(2)-(1-hydroxy-2-oxopropyl)-guanosine in RNA + H2O = a guanosine in RNA + lactate + H(+). It carries out the reaction an N(2)-(1-hydroxy-2-oxopropyl)-2'-deoxyguanosine in DNA + H2O = a 2'-deoxyguanosine in DNA + lactate + H(+). The catalysed reaction is an N(2)-(1-hydroxy-2-oxoethyl)-guanosine in RNA + H2O = a guanosine in RNA + glycolate + H(+). The enzyme catalyses an N(2)-(1-hydroxy-2-oxoethyl)-2'-deoxyguanosine in DNA + H2O = a 2'-deoxyguanosine in DNA + glycolate + H(+). Functionally, multifunctional protein with controversial molecular function which plays an important role in cell protection against oxidative stress and cell death acting as oxidative stress sensor and redox-sensitive chaperone and protease. It is involved in neuroprotective mechanisms like the stabilization of NFE2L2 and PINK1 proteins, male fertility as a positive regulator of androgen signaling pathway as well as cell growth and transformation through, for instance, the modulation of NF-kappa-B signaling pathway. Has been described as a protein and nucleotide deglycase that catalyzes the deglycation of the Maillard adducts formed between amino groups of proteins or nucleotides and reactive carbonyl groups of glyoxals. But this function is rebuted by other works. As a protein deglycase, repairs methylglyoxal- and glyoxal-glycated proteins, and releases repaired proteins and lactate or glycolate, respectively. Deglycates cysteine, arginine and lysine residues in proteins, and thus reactivates these proteins by reversing glycation by glyoxals. Acts on early glycation intermediates (hemithioacetals and aminocarbinols), preventing the formation of advanced glycation endproducts (AGE) that cause irreversible damage. Also functions as a nucleotide deglycase able to repair glycated guanine in the free nucleotide pool (GTP, GDP, GMP, dGTP) and in DNA and RNA. Is thus involved in a major nucleotide repair system named guanine glycation repair (GG repair), dedicated to reversing methylglyoxal and glyoxal damage via nucleotide sanitization and direct nucleic acid repair. Protects histones from adduction by methylglyoxal, controls the levels of methylglyoxal-derived argininine modifications on chromatin. Able to remove the glycations and restore histone 3, histone glycation disrupts both local and global chromatin architecture by altering histone-DNA interactions as well as histone acetylation and ubiquitination levels. Displays a very low glyoxalase activity that may reflect its deglycase activity. Eliminates hydrogen peroxide and protects cells against hydrogen peroxide-induced cell death. Required for correct mitochondrial morphology and function as well as for autophagy of dysfunctional mitochondria. Plays a role in regulating expression or stability of the mitochondrial uncoupling proteins SLC25A14 and SLC25A27 in dopaminergic neurons of the substantia nigra pars compacta and attenuates the oxidative stress induced by calcium entry into the neurons via L-type channels during pacemaking. Regulates astrocyte inflammatory responses, may modulate lipid rafts-dependent endocytosis in astrocytes and neuronal cells. In pancreatic islets, involved in the maintenance of mitochondrial reactive oxygen species (ROS) levels and glucose homeostasis in an age- and diet dependent manner. Protects pancreatic beta cells from cell death induced by inflammatory and cytotoxic setting. Binds to a number of mRNAs containing multiple copies of GG or CC motifs and partially inhibits their translation but dissociates following oxidative stress. Metal-binding protein able to bind copper as well as toxic mercury ions, enhances the cell protection mechanism against induced metal toxicity. In macrophages, interacts with the NADPH oxidase subunit NCF1 to direct NADPH oxidase-dependent ROS production, and protects against sepsis. The protein is Parkinson disease protein 7 homolog (PARK7) of Mesocricetus auratus (Golden hamster).